Here is a 434-residue protein sequence, read N- to C-terminus: Beta-enolase (434 aa).

Alanine 2 carries the post-translational modification N-acetylalanine. The residue at position 72 (threonine 72) is a Phosphothreonine. 2 positions are modified to phosphoserine: serine 83 and serine 157. Residues histidine 158 and glutamate 167 each coordinate substrate. Serine 176 is modified (phosphoserine). Residue threonine 205 is modified to Phosphothreonine. Glutamate 210 acts as the Proton donor in catalysis. Threonine 229 carries the post-translational modification Phosphothreonine. A Phosphotyrosine modification is found at tyrosine 236. Aspartate 245 contributes to the Mg(2+) binding site. Position 263 is a phosphoserine (serine 263). Glutamate 293 and aspartate 318 together coordinate substrate. The Mg(2+) site is built by glutamate 293 and aspartate 318. Lysine 343 functions as the Proton acceptor in the catalytic mechanism. Substrate-binding positions include 370–373 (SHRS) and lysine 394.

The protein belongs to the enolase family. In terms of assembly, mammalian enolase is composed of 3 isozyme subunits, alpha, beta and gamma, which can form homodimers or heterodimers which are cell-type and development-specific. In vitro, interacts with several glycolytic enzymes including PKM, PGM, CKM and ALDO. Also binds PLG and troponin, in vitro. Interacts with PNKD. Mg(2+) is required as a cofactor. Brain (at protein level). The alpha/alpha homodimer is expressed in embryo and in most adult tissues. The alpha/beta heterodimer and the beta/beta homodimer are found in striated muscle, and the alpha/gamma heterodimer and the gamma/gamma homodimer in neurons. In striated muscle, the fiber-type order of ENO3 expression is IIB &gt; IIX &gt; IIA &gt; I.

It is found in the cytoplasm. It carries out the reaction (2R)-2-phosphoglycerate = phosphoenolpyruvate + H2O. It participates in carbohydrate degradation; glycolysis; pyruvate from D-glyceraldehyde 3-phosphate: step 4/5. Glycolytic enzyme that catalyzes the conversion of 2-phosphoglycerate to phosphoenolpyruvate. Appears to have a function in striated muscle development and regeneration. This chain is Beta-enolase (Eno3), found in Mus musculus (Mouse).